A 506-amino-acid polypeptide reads, in one-letter code: Ubiquitin carboxyl-terminal hydrolase 22 (506 aa).

The UBP-type zinc-finger motif lies at 4-121 (AGCSHVNGFK…KEEQRKAWKL (118 aa)). Zn(2+) is bound by residues Cys6, His8, Cys46, Cys49, Cys59, Cys62, Cys67, His72, His76, His82, Cys95, and Cys98. The USP domain occupies 159 to 501 (RGLINLGNTC…EGYLLFYHKQ (343 aa)). Cys168 functions as the Nucleophile in the catalytic mechanism. Catalysis depends on His460, which acts as the Proton acceptor.

The protein belongs to the peptidase C19 family. UBP8 subfamily. Component of some SAGA transcription coactivator-HAT complexes.

It localises to the nucleus. It carries out the reaction Thiol-dependent hydrolysis of ester, thioester, amide, peptide and isopeptide bonds formed by the C-terminal Gly of ubiquitin (a 76-residue protein attached to proteins as an intracellular targeting signal).. Functionally, histone deubiquitinating component of the transcription regulatory histone acetylation (HAT) complex SAGA. Catalyzes the deubiquitination of both histones H2A and H2B, thereby acting as a coactivator. Recruited to specific gene promoters by activators, where it is required for transcription. This chain is Ubiquitin carboxyl-terminal hydrolase 22 (usp22), found in Danio rerio (Zebrafish).